The chain runs to 240 residues: Phosphoribosylaminoimidazole-succinocarboxamide synthase (240 aa).

This sequence belongs to the SAICAR synthetase family.

It catalyses the reaction 5-amino-1-(5-phospho-D-ribosyl)imidazole-4-carboxylate + L-aspartate + ATP = (2S)-2-[5-amino-1-(5-phospho-beta-D-ribosyl)imidazole-4-carboxamido]succinate + ADP + phosphate + 2 H(+). It participates in purine metabolism; IMP biosynthesis via de novo pathway; 5-amino-1-(5-phospho-D-ribosyl)imidazole-4-carboxamide from 5-amino-1-(5-phospho-D-ribosyl)imidazole-4-carboxylate: step 1/2. This is Phosphoribosylaminoimidazole-succinocarboxamide synthase from Wolbachia pipientis subsp. Culex pipiens (strain wPip).